A 94-amino-acid polypeptide reads, in one-letter code: Integration host factor subunit beta (94 aa).

Belongs to the bacterial histone-like protein family. In terms of assembly, heterodimer of an alpha and a beta chain.

This protein is one of the two subunits of integration host factor, a specific DNA-binding protein that functions in genetic recombination as well as in transcriptional and translational control. This chain is Integration host factor subunit beta, found in Pseudomonas paraeruginosa (strain DSM 24068 / PA7) (Pseudomonas aeruginosa (strain PA7)).